Here is a 70-residue protein sequence, read N- to C-terminus: Guanine nucleotide-binding protein subunit gamma-1 (70 aa).

Cysteine 67 bears the Cysteine methyl ester mark. A lipid anchor (S-geranylgeranyl cysteine) is attached at cysteine 67. Positions 68-70 are cleaved as a propeptide — removed in mature form; the sequence is TVL.

The protein belongs to the G protein gamma family. As to quaternary structure, g proteins are composed of 3 units, alpha, beta and gamma. In terms of tissue distribution, predominantly expressed in the central nervous system.

The protein resides in the cell membrane. Guanine nucleotide-binding proteins (G proteins) are involved as a modulator or transducer in various transmembrane signaling systems. The beta and gamma chains are required for the GTPase activity, for replacement of GDP by GTP, and for G protein-effector interaction. The sequence is that of Guanine nucleotide-binding protein subunit gamma-1 (Ggamma1) from Drosophila melanogaster (Fruit fly).